The following is a 252-amino-acid chain: Phosphoglycolate phosphatase (252 aa).

The active-site Nucleophile is aspartate 13. Residues aspartate 13, aspartate 15, and aspartate 192 each contribute to the Mg(2+) site.

This sequence belongs to the HAD-like hydrolase superfamily. CbbY/CbbZ/Gph/YieH family. Monomer. Requires Mg(2+) as cofactor. The cofactor is chloride.

It carries out the reaction 2-phosphoglycolate + H2O = glycolate + phosphate. The protein operates within organic acid metabolism; glycolate biosynthesis; glycolate from 2-phosphoglycolate: step 1/1. Its function is as follows. Specifically catalyzes the dephosphorylation of 2-phosphoglycolate. Is involved in the dissimilation of the intracellular 2-phosphoglycolate formed during the DNA repair of 3'-phosphoglycolate ends, a major class of DNA lesions induced by oxidative stress. The chain is Phosphoglycolate phosphatase from Salmonella paratyphi A (strain ATCC 9150 / SARB42).